Reading from the N-terminus, the 494-residue chain is Alpha-amylase (494 aa).

A signal peptide spans 1 to 26; it reads MQISKAALLASLAALVYAQPVTLFKR. A disulfide bridge connects residues C57 and C65. Residue W110 coordinates substrate. N148 contributes to the Ca(2+) binding site. H149 provides a ligand contact to substrate. C177 and C191 form a disulfide bridge. D202 lines the Ca(2+) pocket. N-linked (GlcNAc...) asparagine glycosylation occurs at N224. A substrate-binding site is contributed by R231. Residues D233, H237, and E257 each contribute to the Ca(2+) site. D233 functions as the Nucleophile in the catalytic mechanism. 236–237 lines the substrate pocket; that stretch reads KH. Catalysis depends on E257, which acts as the Proton donor. Substrate is bound at residue G261. C267 and C310 form a disulfide bridge. Residues D324 and R371 each coordinate substrate. C462 and C493 are joined by a disulfide.

It belongs to the glycosyl hydrolase 13 family. The cofactor is Ca(2+).

The protein resides in the secreted. The enzyme catalyses Endohydrolysis of (1-&gt;4)-alpha-D-glucosidic linkages in polysaccharides containing three or more (1-&gt;4)-alpha-linked D-glucose units.. This Saccharomycopsis fibuligera (Yeast) protein is Alpha-amylase (ALP1).